The sequence spans 266 residues: Glucose 1-dehydrogenase (266 aa).

Residue 15–39 (LVTGASQGIGEATALRFAEEGAQVA) participates in NADP(+) binding. S149 is a substrate binding site. Catalysis depends on Y162, which acts as the Proton acceptor.

The protein belongs to the short-chain dehydrogenases/reductases (SDR) family. Homotetramer or homooctamer.

It catalyses the reaction D-glucose + NADP(+) = D-glucono-1,5-lactone + NADPH + H(+). In terms of biological role, oxidizes both D-glucose and D-mannose, but is 15 times more catalytically efficient with mannose. Strictly dependent on NADP. The protein is Glucose 1-dehydrogenase of Gluconobacter oxydans (strain 621H) (Gluconobacter suboxydans).